The following is a 351-amino-acid chain: Serine/threonine-protein kinase mos (351 aa).

Positions 71 to 340 constitute a Protein kinase domain; sequence FSIDGVIGSG…ERRTDDTENL (270 aa). Residues 77-85 and lysine 98 each bind ATP; that span reads IGSGGFGSV. Catalysis depends on aspartate 194, which acts as the Proton acceptor.

It belongs to the protein kinase superfamily. Ser/Thr protein kinase family.

The enzyme catalyses L-seryl-[protein] + ATP = O-phospho-L-seryl-[protein] + ADP + H(+). It carries out the reaction L-threonyl-[protein] + ATP = O-phospho-L-threonyl-[protein] + ADP + H(+). In terms of biological role, suppresses the mitotic cell cycle in oocytes, forcing them to undergo meiosis II to produce haploid gametes. Acts as a MAPK kinase kinase (MAP3K) that acts upstream of MAP kinase in oocytes. This is Serine/threonine-protein kinase mos from Patiria pectinifera (Starfish).